We begin with the raw amino-acid sequence, 754 residues long: Lysyl oxidase homolog 3 (754 aa).

The signal sequence occupies residues 1–26 (MRAVSVWYCCPWGLLLLHCLCSFSVG). SRCR domains are found at residues 45–146 (FRLA…VICK), 170–283 (VRLR…VSCV), 308–408 (VRLK…VRCN), and 418–526 (IRLS…VICS). 17 cysteine pairs are disulfide-bonded: Cys-71-Cys-135, Cys-84-Cys-145, Cys-115-Cys-125, Cys-202-Cys-272, Cys-215-Cys-282, Cys-249-Cys-259, Cys-333-Cys-397, Cys-346-Cys-407, Cys-377-Cys-387, Cys-447-Cys-512, Cys-460-Cys-525, Cys-493-Cys-503, Cys-555-Cys-561, Cys-607-Cys-655, Cys-639-Cys-645, Cys-667-Cys-677, and Cys-714-Cys-728. N-linked (GlcNAc...) asparagine glycosylation occurs at Asn-112. N-linked (GlcNAc...) asparagine glycosylation is present at Asn-267. 2 N-linked (GlcNAc...) asparagine glycosylation sites follow: Asn-391 and Asn-482. Residues 530–733 (SDLLLHSALV…WVHNCHIGDA (204 aa)) form a lysyl-oxidase like region. His-608, His-610, and His-612 together coordinate Cu cation. The N-linked (GlcNAc...) asparagine glycan is linked to Asn-626. A cross-link (lysine tyrosylquinone (Lys-Tyr)) is located at residues 635-671 (KASFCLEDTECQEDVSKRYECANFGEQGITVGCWDLY). A 2',4',5'-topaquinone modification is found at Tyr-671.

Belongs to the lysyl oxidase family. Requires Cu cation as cofactor. The cofactor is lysine tyrosylquinone residue. Post-translationally, the lysine tyrosylquinone cross-link (LTQ) is generated by condensation of the epsilon-amino group of a lysine with a topaquinone produced by oxidation of tyrosine. Expressed in palate: predominantly present in the palate mesenchyme and tongue (at protein level). In spine, expressed in the original intervertebral disk, cartilage primordia, anterior and posterior longitudinal ligaments, meninges of spinal cord, lung and heart. In eyes, strongly expressed in the skin of the eyelid and weakly expressed in the cornea and sclera. In lung, predominantly expressed in the pulmonary mesenchyme. In developing muscle, expressed at myofiber ends (at protein level).

It is found in the secreted. The protein localises to the extracellular space. It localises to the cytoplasm. Its subcellular location is the nucleus. It carries out the reaction L-lysyl-[protein] + O2 + H2O = (S)-2-amino-6-oxohexanoyl-[protein] + H2O2 + NH4(+). The enzyme catalyses N(6)-acetyl-L-lysyl-[protein] + O2 + H2O = acetamide + (S)-2-amino-6-oxohexanoyl-[protein] + H2O2. Protein-lysine 6-oxidase that mediates the oxidation of peptidyl lysine residues to allysine in target proteins. Catalyzes the post-translational oxidative deamination of peptidyl lysine residues in precursors of elastin and different types of collagens, a prerequisite in the formation of cross-links between collagens and elastin. Required for somite boundary formation by catalyzing oxidation of fibronectin (FN1), enhancing integrin signaling in myofibers and their adhesion to the myotendinous junction (MTJ). Acts as a regulator of inflammatory response by inhibiting differentiation of naive CD4(+) T-cells into T-helper Th17 or regulatory T-cells (Treg): acts by interacting with STAT3 in the nucleus and catalyzing both deacetylation and oxidation of lysine residues on STAT3, leading to disrupt STAT3 dimerization and inhibit STAT3 transcription activity. Oxidation of lysine residues to allysine on STAT3 preferentially takes place on lysine residues that are acetylated. Also able to catalyze deacetylation of lysine residues on STAT3. The protein is Lysyl oxidase homolog 3 of Mus musculus (Mouse).